Here is a 379-residue protein sequence, read N- to C-terminus: UDP-4-amino-4-deoxy-L-arabinose--oxoglutarate aminotransferase (379 aa).

Residue lysine 182 is modified to N6-(pyridoxal phosphate)lysine.

It belongs to the DegT/DnrJ/EryC1 family. ArnB subfamily. Homodimer. Pyridoxal 5'-phosphate serves as cofactor.

The enzyme catalyses UDP-4-amino-4-deoxy-beta-L-arabinose + 2-oxoglutarate = UDP-beta-L-threo-pentopyranos-4-ulose + L-glutamate. It participates in nucleotide-sugar biosynthesis; UDP-4-deoxy-4-formamido-beta-L-arabinose biosynthesis; UDP-4-deoxy-4-formamido-beta-L-arabinose from UDP-alpha-D-glucuronate: step 2/3. It functions in the pathway bacterial outer membrane biogenesis; lipopolysaccharide biosynthesis. Its function is as follows. Catalyzes the conversion of UDP-4-keto-arabinose (UDP-Ara4O) to UDP-4-amino-4-deoxy-L-arabinose (UDP-L-Ara4N). The modified arabinose is attached to lipid A and is required for resistance to polymyxin and cationic antimicrobial peptides. In Salmonella choleraesuis (strain SC-B67), this protein is UDP-4-amino-4-deoxy-L-arabinose--oxoglutarate aminotransferase.